Here is a 520-residue protein sequence, read N- to C-terminus: ATP synthase subunit alpha 2 (520 aa).

176–183 contacts ATP; that stretch reads GDRQTGKT.

It belongs to the ATPase alpha/beta chains family. F-type ATPases have 2 components, CF(1) - the catalytic core - and CF(0) - the membrane proton channel. CF(1) has five subunits: alpha(3), beta(3), gamma(1), delta(1), epsilon(1). CF(0) has three main subunits: a(1), b(2) and c(9-12). The alpha and beta chains form an alternating ring which encloses part of the gamma chain. CF(1) is attached to CF(0) by a central stalk formed by the gamma and epsilon chains, while a peripheral stalk is formed by the delta and b chains.

The protein localises to the cell inner membrane. It carries out the reaction ATP + H2O + 4 H(+)(in) = ADP + phosphate + 5 H(+)(out). Its function is as follows. Produces ATP from ADP in the presence of a proton gradient across the membrane. The alpha chain is a regulatory subunit. In Polaromonas naphthalenivorans (strain CJ2), this protein is ATP synthase subunit alpha 2.